A 261-amino-acid polypeptide reads, in one-letter code: MIIAKNIEQFNLLRESFTKDRKIGFVPTMGALHNGHICLIKKAKSENDVTIVSIFVNPTQFNNPNDYQTYPNQLQQDIQILESLDVDILFNPSEKDIYPDGNLLRIQPELEIANILEGKARPGHFSGMLTVVLKLLQITKPDNLYLGEKDYQQVMLIKQLVKDFFIKTKVIVCSTQRQATGLPLSSRNKNLTSADIEIANKVYEILRQDNFLDLEELTNKINSTGARTEYIQKINNRIFLALYISKVRLIDNFLKETGPSC.

29–36 lines the ATP pocket; that stretch reads MGALHNGH. Catalysis depends on His36, which acts as the Proton donor. Gln60 is a binding site for (R)-pantoate. Beta-alanine is bound at residue Gln60. 147–150 serves as a coordination point for ATP; the sequence is GEKD. Residue Gln153 coordinates (R)-pantoate. An ATP-binding site is contributed by 184–187; sequence LSSR.

The protein belongs to the pantothenate synthetase family. In terms of assembly, homodimer.

Its subcellular location is the cytoplasm. The enzyme catalyses (R)-pantoate + beta-alanine + ATP = (R)-pantothenate + AMP + diphosphate + H(+). Its pathway is cofactor biosynthesis; (R)-pantothenate biosynthesis; (R)-pantothenate from (R)-pantoate and beta-alanine: step 1/1. In terms of biological role, catalyzes the condensation of pantoate with beta-alanine in an ATP-dependent reaction via a pantoyl-adenylate intermediate. In Francisella philomiragia subsp. philomiragia (strain ATCC 25017 / CCUG 19701 / FSC 153 / O#319-036), this protein is Pantothenate synthetase.